The following is a 101-amino-acid chain: UPF0235 protein Mevan_0378 (101 aa).

Belongs to the UPF0235 family.

In Methanococcus vannielii (strain ATCC 35089 / DSM 1224 / JCM 13029 / OCM 148 / SB), this protein is UPF0235 protein Mevan_0378.